A 226-amino-acid polypeptide reads, in one-letter code: V-type proton ATPase subunit E (226 aa).

It belongs to the V-ATPase E subunit family. In terms of assembly, V-ATPase is a heteromultimeric enzyme composed of a peripheral catalytic V1 complex (components A to H) attached to an integral membrane V0 proton pore complex (components: a, c, c', c'', d, e, f and VOA1).

It localises to the vacuole membrane. Its function is as follows. Subunit of the V1 complex of vacuolar(H+)-ATPase (V-ATPase), a multisubunit enzyme composed of a peripheral complex (V1) that hydrolyzes ATP and a membrane integral complex (V0) that translocates protons. V-ATPase is responsible for acidifying and maintaining the pH of intracellular compartments. This Candida albicans (Yeast) protein is V-type proton ATPase subunit E (VMA4).